The sequence spans 501 residues: Acyl-CoA-binding domain-containing protein 5A (501 aa).

The ACB domain maps to 9 to 98; sequence YEQRFNAAVK…LKLILESMPV (90 aa). Residues 20 to 29, 40 to 44, lysine 66, and tyrosine 85 contribute to the an acyl-CoA site; these read IQNLPPNGSF and YSYYK. Residues 173-405 are disordered; that stretch reads IDLEDREDDD…GERWGADGPM (233 aa). Acidic residues predominate over residues 176–195; sequence EDREDDDDEDEEGERDEVEE. Polar residues predominate over residues 219 to 235; that stretch reads SNGSISQHKGLSNGTHG. Basic and acidic residues-rich tracts occupy residues 236–254, 266–283, and 328–366; these read SKSD…HMNH, NSEK…HVAS, and RSQD…KRSD. Residues 376–389 show a composition bias toward low complexity; that stretch reads SRSPASGSGSAGPQ. The stretch at 406–437 forms a coiled coil; the sequence is TENLNEQIICALARLQDDMQSVLQRLHTLEAL. Residues 465 to 485 traverse the membrane as a helical segment; it reads WWPFDVSLGTVAFAVVWPFVV.

The protein belongs to the ATG37 family.

Its subcellular location is the membrane. Its function is as follows. Acyl-CoA binding protein which acts as the peroxisome receptor for pexophagy but is dispensable for aggrephagy and nonselective autophagy. Binds medium- and long-chain acyl-CoA esters. This Danio rerio (Zebrafish) protein is Acyl-CoA-binding domain-containing protein 5A (acbd5a).